Consider the following 248-residue polypeptide: MSPSATVFDIGGNAVGTLQLVGHLFDSDPNLHLIHQVVVAQQAAFRQGTHKTKSRAEVSGSGRKPFRQKGTGNARCGSTRAPQMRGGGVVHGPVPRSYVHRTPKKMIKAALAGCLTNRARAGRVHIVDSFGDTPSVADALTLFQITGLSSKLLVVAQASDSVAYRSVRNIPGVRLVHVGQLNSYDVLRSDDVLFTRGAYNVFVGPSGDLAFSEDRDNPGTSLPKSPTPEDSSDATKARSSRHDDRTGA.

Disordered regions lie at residues 48-95 and 210-248; these read GTHK…GPVP and AFSE…RTGA. The span at 233–248 shows a compositional bias: basic and acidic residues; that stretch reads DATKARSSRHDDRTGA.

This sequence belongs to the universal ribosomal protein uL4 family. As to quaternary structure, part of the 50S ribosomal subunit.

Its function is as follows. One of the primary rRNA binding proteins, this protein initially binds near the 5'-end of the 23S rRNA. It is important during the early stages of 50S assembly. It makes multiple contacts with different domains of the 23S rRNA in the assembled 50S subunit and ribosome. In terms of biological role, forms part of the polypeptide exit tunnel. The protein is Large ribosomal subunit protein uL4 of Tropheryma whipplei (strain TW08/27) (Whipple's bacillus).